The sequence spans 473 residues: Putative protein TIC 214 C-terminal part (473 aa).

This sequence belongs to the TIC214 family. As to quaternary structure, part of the Tic complex.

The protein localises to the plastid. Its subcellular location is the chloroplast. Functionally, involved in protein precursor import into chloroplasts. May be part of an intermediate translocation complex acting as a protein-conducting channel at the inner envelope. In Anthoceros angustus (Hornwort), this protein is Putative protein TIC 214 C-terminal part.